The primary structure comprises 589 residues: Kelch-like protein 25 (589 aa).

Positions 46 to 114 (TDVTLWAGDR…AYSSRIAINE (69 aa)) constitute a BTB domain. In terms of domain architecture, BACK spans 149–250 (CLGMMLLSDA…LPSDCLQEAV (102 aa)). Kelch repeat units follow at residues 296–340 (TLLI…AIGC), 341–388 (KVYV…ELEN), 389–444 (CLYV…SAKL), 446–492 (LFVF…VLGS), 494–538 (IFIM…ASGN), and 539–585 (KLYV…STWK).

Component of the BCR(KLHL25) E3 ubiquitin ligase complex, at least composed of CUL3, KLHL25 and RBX1.

The protein operates within protein modification; protein ubiquitination. Substrate-specific adapter of a BCR (BTB-CUL3-RBX1) E3 ubiquitin ligase complex involved in various processes, such as translation homeostasis and lipid synthesis. The BCR(KLHL25) ubiquitin ligase complex acts by mediating ubiquitination of hypophosphorylated EIF4EBP1 (4E-BP1): ubiquitination and subsequent degradation of hypophosphorylated EIF4EBP1 (4E-BP1) probably serves as a homeostatic mechanism to maintain translation and prevent eIF4E inhibition when eIF4E levels are low. The BCR(KLHL25) complex does not target EIF4EBP1 (4E-BP1) when it is hyperphosphorylated or associated with eIF4E. The BCR(KLHL25) complex also acts as a regulator of lipid synthesis by mediating ubiquitination and degradation of ACLY, thereby inhibiting lipid synthesis. BCR(KLHL25)-mediated degradation of ACLY promotes fatty acid oxidation and is required for differentiation of inducible regulatory T (iTreg) cells. The polypeptide is Kelch-like protein 25 (Homo sapiens (Human)).